Here is a 1070-residue protein sequence, read N- to C-terminus: 3',5'-cyclic-AMP phosphodiesterase (1070 aa).

Disordered regions lie at residues 1 to 91 (MSQE…KQDS), 166 to 215 (STSI…TRFQ), 487 to 516 (VPAS…LSQG), and 615 to 653 (SAGQ…RLPT). Residues 51-69 (KQVQVQSQKFSSTSSTTKV) show a composition bias toward low complexity. Polar residues predominate over residues 70-84 (ATHSFSMSSSAGTTG). Residues 166–210 (STSIITSSEQRTSTSTSSSSSTRYIASGSSNLAGGNSNSASSASS) show a composition bias toward low complexity. Polar residues predominate over residues 488–506 (PASNKSRRPNQSSSASRSG). In terms of domain architecture, PDEase spans 656 to 985 (VETPRENELG…DYYQSMIPPS (330 aa)). The Proton donor role is filled by histidine 732. 732–736 (HNSLH) lines the 3',5'-cyclic AMP pocket. The a divalent metal cation site is built by histidine 736, histidine 772, aspartate 773, and aspartate 890. 3',5'-cyclic AMP is bound by residues aspartate 773, aspartate 890, and glutamine 941. Residues 1007 to 1024 (EESDQENLAELEEGDESG) are compositionally biased toward acidic residues. The disordered stretch occupies residues 1007 to 1070 (EESDQENLAE…CQNQPQHGGM (64 aa)). Residues 1025-1042 (GESTTTGTTGTTAASALS) are compositionally biased toward low complexity. Positions 1043 to 1054 (GAGGGGGGGGGM) are enriched in gly residues. Over residues 1060–1070 (GCQNQPQHGGM) the composition is skewed to polar residues.

The protein belongs to the cyclic nucleotide phosphodiesterase family. PDE4 subfamily. In terms of assembly, monomer. It depends on a divalent metal cation as a cofactor.

It catalyses the reaction 3',5'-cyclic AMP + H2O = AMP + H(+). Its pathway is purine metabolism; 3',5'-cyclic AMP degradation; AMP from 3',5'-cyclic AMP: step 1/1. Functionally, hydrolyzes the second messenger cAMP, which is a key regulator of many important physiological processes. Vital for female fertility. Required for learning/memory. This chain is 3',5'-cyclic-AMP phosphodiesterase (dnc), found in Drosophila melanogaster (Fruit fly).